Consider the following 323-residue polypeptide: MSDGAAARRWGKCGHSCSRESIMVAFKGVWTQAFWKAVSAEFLATLIFVLLGVGSTINWGGSENPLPVDMVLISLCFGLSIATMVQCFGHISGGHINPAVTVAMVCTRKISIAKSVFYIIAQCLGAIIGAGILYLVTPPSVVGGLGVTTVHGNLTAGHGLLVELIITFQLVFTIFASCDSKRTDVTGSIALAIGFSVAIGHLFAINYTGASMNPARSFGPAVIMGNWANHWIYWVGPIMGAVLAGALYEYVFCPDVELKRRLKEAFSKAAQQTKGSYMEVEDNRSQVETEDLILKPGVVHVIDIDRGEEKKGKDSSGEVLSSV.

Topologically, residues 1–36 (MSDGAAARRWGKCGHSCSRESIMVAFKGVWTQAFWK) are cytoplasmic. 2 S-palmitoyl cysteine lipidation sites follow: cysteine 13 and cysteine 17. The chain crosses the membrane as a helical span at residues 37–57 (AVSAEFLATLIFVLLGVGSTI). The Extracellular portion of the chain corresponds to 58–69 (NWGGSENPLPVD). The chain crosses the membrane as a helical span at residues 70–89 (MVLISLCFGLSIATMVQCFG). Over 90 to 93 (HISG) the chain is Cytoplasmic. An intramembrane region (discontinuously helical) is located at residues 94-101 (GHINPAVT). Residues 97–99 (NPA) carry the NPA 1 motif. Residues 102–115 (VAMVCTRKISIAKS) are Cytoplasmic-facing. Serine 111 carries the phosphoserine; by PKG modification. Residues 116–136 (VFYIIAQCLGAIIGAGILYLV) form a helical membrane-spanning segment. Residues 137–155 (TPPSVVGGLGVTTVHGNLT) lie on the Extracellular side of the membrane. N-linked (GlcNAc...) asparagine glycosylation is present at asparagine 153. Residues 156–176 (AGHGLLVELIITFQLVFTIFA) traverse the membrane as a helical segment. Over 177-184 (SCDSKRTD) the chain is Cytoplasmic. A Phosphoserine; by PKC modification is found at serine 180. The chain crosses the membrane as a helical span at residues 185–205 (VTGSIALAIGFSVAIGHLFAI). N-linked (GlcNAc...) asparagine glycosylation is present at asparagine 206. Residues 206–208 (NYT) are Extracellular-facing. An intramembrane region (discontinuously helical) is located at residues 209–222 (GASMNPARSFGPAV). Residues 213 to 215 (NPA) carry the NPA 2 motif. The Extracellular segment spans residues 223-231 (IMGNWANHW). A helical transmembrane segment spans residues 232 to 252 (IYWVGPIMGAVLAGALYEYVF). At 253–323 (CPDVELKRRL…DSSGEVLSSV (71 aa)) the chain is on the cytoplasmic side. A phosphoserine mark is found at serine 276 and serine 285. Threonine 289 is modified (phosphothreonine). Phosphoserine is present on serine 321.

This sequence belongs to the MIP/aquaporin (TC 1.A.8) family. In terms of assembly, homotetramer. The tetramers can form oligomeric arrays in membranes. The size of the oligomers differs between tissues and is smaller in skeletal muscle than in brain. Interaction between AQP4 oligomeric arrays in close-by cells can contribute to cell-cell adhesion. Part of a complex containing MLC1, TRPV4, HEPACAM and ATP1B1. Post-translationally, phosphorylation by PKC at Ser-180 reduces conductance by 50%. Phosphorylation by PKG at Ser-111 in response to glutamate increases conductance by 40%; this increase is not due to increased presence at the cell membrane. Isoform 2: Palmitoylated on its N-terminal region. Isoform 1: Not palmitoylated. In terms of tissue distribution, detected in brain cortex, especially around cortical blood vessels, and subjacent to pia, with lower levels in parenchymal membranes. Detected in ependymal and astroglial cells in brain. Detected in supporting Hensen's cells, inner sulcus cells and Claudius cells in the inner ear. Detected in skeletal muscle. Detected in gastric parietal cells. Detected in principal cells in collecting ducts in kidney medulla (at protein level). Detected in brain, heart and skeletal muscle.

The protein resides in the cell membrane. The protein localises to the basolateral cell membrane. It is found in the endosome membrane. It localises to the sarcolemma. Its subcellular location is the cell projection. The enzyme catalyses H2O(in) = H2O(out). Forms a water-specific channel. Plays an important role in brain water homeostasis and in glymphatic solute transport. Required for a normal rate of water exchange across the blood brain interface. Required for normal levels of cerebrospinal fluid influx into the brain cortex and parenchyma along paravascular spaces that surround penetrating arteries, and for normal drainage of interstitial fluid along paravenous drainage pathways. Thereby, it is required for normal clearance of solutes from the brain interstitial fluid, including soluble beta-amyloid peptides derived from APP. Plays a redundant role in urinary water homeostasis and urinary concentrating ability. The protein is Aquaporin-4 (Aqp4) of Mus musculus (Mouse).